A 98-amino-acid polypeptide reads, in one-letter code: Thrombin-like enzyme cerastotin (98 aa).

Positions 1 to 98 (VIGGAECNIN…IKKPVNGSTH (98 aa)) constitute a Peptidase S1 domain. Residues H41 and D85 each act as charge relay system in the active site. N94 carries an N-linked (GlcNAc...) asparagine glycan.

Belongs to the peptidase S1 family. Snake venom subfamily. In terms of assembly, monomer. In terms of tissue distribution, expressed by the venom gland.

The protein localises to the secreted. Its activity is regulated as follows. Inhibited by PMSF. In terms of biological role, thrombin-like snake venom serine protease that preferentially cleaves the alpha-chain of fibrinogen (FGA). Induce platelet aggregation in the presence of exogenous fibrinogen. Possesses esterase and amidolytic activities. The chain is Thrombin-like enzyme cerastotin from Cerastes cerastes (Horned desert viper).